The sequence spans 386 residues: Circumsporozoite protein (386 aa).

A signal peptide spans 1–22 (MKNFILLAVSSILLVDLFPTHC). Positions 51 to 304 (HVGQSASRGR…NEGANAPNEK (254 aa)) are disordered. Basic and acidic residues predominate over residues 72 to 100 (DAKKKKDGKKAEPKNPRENKLKQPGDRAD). Residues 80-88 (KKAEPKNPR) form a required for the binding to heparan sulfate proteoglycans (HSPGs) on the surface of host hepatocytes region. The segment at 91-95 (KLKQP) is region I; contains the proteolytic cleavage site. Repeat copies occupy residues 96-104 (GDRADGQPA), 105-113 (GDRADGQPA), 114-122 (GDRADGQPA), 123-131 (GDRADGQPA), 132-140 (GDRADGQPA), 141-149 (GDRAAGQPA), 150-158 (GDRADGQPA), 159-167 (GDRADGQPA), 168-176 (GDRAAGQPA), 177-185 (GDRAAGQPA), 186-194 (GDRADGQPA), 195-203 (GDRADGQPA), 204-212 (GDRADGQPA), 213-221 (GDRAAGQPA), 222-230 (GDRAAGQPA), 231-239 (GDRAAGQPA), 240-248 (GDRAAGQPA), 249-257 (GDRAAGQPA), 258-266 (GDRAAGQPA), and 267-275 (GDRAAGQPA). Residues 96–275 (GDRADGQPAG…AGDRAAGQPA (180 aa)) are 20 X 9 AA tandem repeats of G-D-R-A-[AD]-G-Q-P-A. A compositionally biased stretch (gly residues) spans 275 to 292 (AGNGAGGQAAGGNAGGQG). A compositionally biased stretch (low complexity) spans 293-303 (QNNEGANAPNE). The 53-residue stretch at 312–364 (KVRATVGTEWTPCSVTCGVGVRVRRRVNAANKKPEDLTLNDLETDVCTMDKCA) folds into the TSP type-1 domain. Cystine bridges form between cysteine 324–cysteine 358 and cysteine 328–cysteine 363. An O-linked (Fuc) threonine glycan is attached at threonine 327. A lipid anchor (GPI-anchor amidated cysteine) is attached at cysteine 363. Positions 364-386 (AGIFNVVSNSLGLVILLVLALFN) are cleaved as a propeptide — removed in mature form.

The protein belongs to the plasmodium circumsporozoite protein family. During host cell invasion, proteolytically cleaved at the cell membrane in the region I by a papain-like cysteine protease of parasite origin. Cleavage is triggered by the sporozoite contact with highly sulfated heparan sulfate proteoglycans (HSPGs) present on the host hepatocyte cell surface. Cleavage exposes the TSP type-1 (TSR) domain and is required for productive invasion of host hepatocytes but not for adhesion to the host cell membrane. Cleavage is dispensable for sporozoite development in the oocyst, motility and for traversal of host and vector cells. Post-translationally, O-glycosylated; maybe by POFUT2.

The protein resides in the cell membrane. It is found in the cytoplasm. Functionally, essential sporozoite protein. In the mosquito vector, required for sporozoite development in the oocyst, migration through the vector hemolymph and entry into the vector salivary glands. In the vertebrate host, required for sporozoite migration through the host dermis and infection of host hepatocytes. Binds to highly sulfated heparan sulfate proteoglycans (HSPGs) on the surface of host hepatocytes. Its function is as follows. In the vertebrate host, binds to highly sulfated heparan sulfate proteoglycans (HSPGs) on the surface of host hepatocytes and is required for sporozoite invasion of the host hepatocytes. The polypeptide is Circumsporozoite protein (Plasmodium simium).